Reading from the N-terminus, the 244-residue chain is Cell division protein ZapD (244 aa).

The protein belongs to the ZapD family. As to quaternary structure, interacts with FtsZ.

It is found in the cytoplasm. In terms of biological role, cell division factor that enhances FtsZ-ring assembly. Directly interacts with FtsZ and promotes bundling of FtsZ protofilaments, with a reduction in FtsZ GTPase activity. This is Cell division protein ZapD from Shewanella sp. (strain MR-4).